Consider the following 273-residue polypeptide: 2,3,4,5-tetrahydropyridine-2,6-dicarboxylate N-succinyltransferase (273 aa).

2 residues coordinate substrate: R104 and D141.

The protein belongs to the transferase hexapeptide repeat family. Homotrimer.

It localises to the cytoplasm. It catalyses the reaction (S)-2,3,4,5-tetrahydrodipicolinate + succinyl-CoA + H2O = (S)-2-succinylamino-6-oxoheptanedioate + CoA. Its pathway is amino-acid biosynthesis; L-lysine biosynthesis via DAP pathway; LL-2,6-diaminopimelate from (S)-tetrahydrodipicolinate (succinylase route): step 1/3. This chain is 2,3,4,5-tetrahydropyridine-2,6-dicarboxylate N-succinyltransferase, found in Nitrosococcus oceani (strain ATCC 19707 / BCRC 17464 / JCM 30415 / NCIMB 11848 / C-107).